The sequence spans 495 residues: Polybrominated aromatic compounds synthase (495 aa).

Residue Cys437 participates in heme binding.

Belongs to the cytochrome P450 family. Heme serves as cofactor.

Functionally, cytochrome P450 protein involved in the biosynthesis of polybrominated aromatic organic compounds. In the presence of ferredoxin, ferredoxin reductase and NADH, catalyzes the coupling of bromophenols and bromopyrroles, forming various polybrominated biphenyls and hydroxylated polybrominated diphenyl ethers (OH-BDE). Can also mediate the heterocoupling of 3,5-dibromocatechol, forming six different compounds, including polybrominated dibenzo-p-dioxins, which are among the most toxic molecules known to man. This is Polybrominated aromatic compounds synthase from Marinomonas mediterranea (strain ATCC 700492 / JCM 21426 / NBRC 103028 / MMB-1).